Here is a 1193-residue protein sequence, read N- to C-terminus: DNA-directed RNA polymerase subunit beta (1193 aa).

The segment covering 1153-1162 has biased composition (acidic residues); that stretch reads EMRDLEDDED. A disordered region spans residues 1153-1193; the sequence is EMRDLEDDEDAKQNEGLSLPNDEESEELVSADAERDVVTKE. Positions 1184–1193 are enriched in basic and acidic residues; it reads DAERDVVTKE.

Belongs to the RNA polymerase beta chain family. As to quaternary structure, the RNAP catalytic core consists of 2 alpha, 1 beta, 1 beta' and 1 omega subunit. When a sigma factor is associated with the core the holoenzyme is formed, which can initiate transcription.

It catalyses the reaction RNA(n) + a ribonucleoside 5'-triphosphate = RNA(n+1) + diphosphate. Its function is as follows. DNA-dependent RNA polymerase catalyzes the transcription of DNA into RNA using the four ribonucleoside triphosphates as substrates. The protein is DNA-directed RNA polymerase subunit beta of Bacillus licheniformis (strain ATCC 14580 / DSM 13 / JCM 2505 / CCUG 7422 / NBRC 12200 / NCIMB 9375 / NCTC 10341 / NRRL NRS-1264 / Gibson 46).